A 403-amino-acid polypeptide reads, in one-letter code: Aspartic protease pepA (403 aa).

Positions 1–20 (MVLITQLGAALAVFSALTVA) are cleaved as a signal peptide. A propeptide spans 21–67 (APTKGKARFSAPQVGIPKKAKHHPAAAYARALHKFGMKIPKAVSDAA) (activation peptide). The Peptidase A1 domain occupies 82–400 (YVTQVTVGGS…DTQGPRIGFA (319 aa)). Residue Asp-98 is part of the active site. A glycan (N-linked (GlcNAc...) asparagine) is linked at Asn-270. Asp-293 is an active-site residue. The cysteines at positions 329 and 362 are disulfide-linked.

This sequence belongs to the peptidase A1 family. In terms of assembly, monomer.

It localises to the secreted. Its function is as follows. Secreted aspartic endopeptidase that allows assimilation of proteinaceous substrates. The scissile peptide bond is attacked by a nucleophilic water molecule activated by two aspartic residues in the active site. Shows a broad primary substrate specificity. Favors hydrophobic residues at the P1 and P1' positions. This chain is Aspartic protease pepA, found in Arthroderma gypseum (strain ATCC MYA-4604 / CBS 118893) (Microsporum gypseum).